We begin with the raw amino-acid sequence, 131 residues long: Conotoxin Cal8.1 (131 aa).

The first 19 residues, 1–19 (MKLLLTLLLGSALMCITLA), serve as a signal peptide directing secretion. The propeptide occupies 20-38 (DECGLGTHRPVKEVIDNVR).

Contains 4 disulfide bonds. As to expression, expressed by the venom duct.

The protein resides in the secreted. In terms of biological role, probable neurotoxin with unknown target. Possibly targets ion channels. This is Conotoxin Cal8.1 from Californiconus californicus (California cone).